We begin with the raw amino-acid sequence, 224 residues long: MLDHPKLTARQQQILDLIQAAISRTGAPPTRAEIANTLGFKSANAAEEHLQALARKGVIELVSGTSRGIRLRTDTVRNINAARGTSFGLPLSALAPLMLPLVGRVAAGSPILAQEHIDQTYSVEPSLFQTRPDYLLRVRGMSMRDAGIMDGDLLAVQSAHEARNGQIVVARLGDEVTVKRLRRTTQGVELLPENPDYPVIRVAPEEAFAIEGLAVGLIRNSMSM.

Positions 31 to 51 (RAEIANTLGFKSANAAEEHLQ) form a DNA-binding region, H-T-H motif. Catalysis depends on for autocatalytic cleavage activity residues Ser-142 and Lys-179.

It belongs to the peptidase S24 family. In terms of assembly, homodimer.

It catalyses the reaction Hydrolysis of Ala-|-Gly bond in repressor LexA.. Its function is as follows. Represses a number of genes involved in the response to DNA damage (SOS response), including recA and lexA. In the presence of single-stranded DNA, RecA interacts with LexA causing an autocatalytic cleavage which disrupts the DNA-binding part of LexA, leading to derepression of the SOS regulon and eventually DNA repair. The sequence is that of LexA repressor from Delftia acidovorans (strain DSM 14801 / SPH-1).